Here is a 109-residue protein sequence, read N- to C-terminus: U4-lycotoxin-Ls1d (109 aa).

A signal peptide spans 1 to 22; sequence MKVLVLFSVLFLTLFSYSSTEA. A propeptide spanning residues 23-44 is cleaved from the precursor; sequence MDEFDSDAEEDMLSLMANEQVR. The interval 45-88 is knottin domain; sequence AKACTPRLHDCSHDRHSCCRGELFKDVCYCFYPEGEDKTEVCSC. 4 cysteine pairs are disulfide-bonded: Cys48-Cys63, Cys55-Cys72, Cys62-Cys88, and Cys74-Cys86. Positions 89–108 are linear cationic cytotoxin domain; it reads QQPKSHKYIEKVVDKARTVV.

Belongs to the neurotoxin 19 (CSTX) family. 05 (U4-Lctx) subfamily. As to expression, expressed by the venom gland.

It localises to the secreted. Its function is as follows. Enhances the high-affinity desensitization of human P2RX3 purinoceptors. This Lycosa singoriensis (Wolf spider) protein is U4-lycotoxin-Ls1d.